The primary structure comprises 500 residues: MSNMQQKTDVILIGAGIMSATLGSLLKELAPEWEIKVFEKLASAGEESSNEWNNAGTGHSALCELNYTSEKADGSIDISKAVKVNEQFQLSRQFWAYLVKSKLIRNPQDFIMPLPHMSLVQGEKNVEFLKNRFEALSKNPLFQGMEFSDAPETLKRWLPLIMEGRTSNEPMAATKIDSGTDVNFGALTRMLFDYLKTKNVELNYKHSVENIKRTKNGLWEVKVHDMNSGKIEHHTAKFVFIGGGGGSLPLLQKTGIPESKHIGGFPVSGLFMVCKNQKVVEQHHAKVYGKAKVGAPPMSVPHLDTRYIDNKKALLFGPFAGFSPKFLKTGSNLDLIGSVKPNNVLTMLAAGVKEMGLTKYLIQQVMLSHEKRMEELREFIPNAKSEDWDIVVAGQRVQVIKDTDAGGKGTLQFGTEVVSAADGSIAALLGASPGASTAVHVMLEVLEKCFPSRMVEWEEKIKEMIPSYGISLTENPRLFQDLHTSTGRTLGLNEKETVHN.

Belongs to the MQO family. Requires FAD as cofactor.

It carries out the reaction (S)-malate + a quinone = a quinol + oxaloacetate. It participates in carbohydrate metabolism; tricarboxylic acid cycle; oxaloacetate from (S)-malate (quinone route): step 1/1. The chain is Probable malate:quinone oxidoreductase from Bacillus cereus (strain B4264).